Here is a 797-residue protein sequence, read N- to C-terminus: MKEGRKRLRAGYCYMLAGVVGVASTGSSRADSEPQSAAMLDWRMREFLTPQQMTTLEPQCRGTYVEPEYGFVNAPSTTSTPDNEALRARSDTLVSPSESAMRLQGNVKAQQGAWWLEADQVELDRQTNVVDLQGLKAARAPGLLLHGDTARYNLDTKDFSLSDASYLIHQRHARGDAERISSADAQLVRIEDGSYTTCDPTHNDWSIAASEIILDREQGEGAAKHMTLRIKDVPVMYFPYLRFPIDDRRKSGFLYPTIGTSNTGRGMSFGIPYYFNLAPNYDATYSPLYMHGRGLLSELEGRWLTEDTYSEVRLGYIAHDSEFSKENPDESGRRWALDFTNRYDVSENWRSTIDYNVVSDKDYLNDLNRTLEIQQETHIKRSWDVAYLGGGFSFKSHVQGYQTVDDDIVDNDRPYMLLPQLSFGWERDFDPVAFGLESEFTYFWRDDENLDPARDQQVVGARWRTQPSLTLPLSTTWGYLTPKLRLDHTDYQLEQRVTGLDESISRTVPFYSLDAGMYFDRTLSLFGDEYNQSLEPRLFYVYSPEQDQDDIPDFDTSVATFSYSQLYKEDRFVGGDRVGDNNRLTLGVTSRFNDRATGAERLRASVGQIFYYEDQQVGLGTEGLSDESESPWAGELVWRPNDRFDFKVEGLWDWQERQTEKGATTLAFHDPEYRKLLNLSHRYTHNDLEQTDVSVLFPVTDSVSVLGRWFFDLVNHRTIGTMAGVEYNDCCWRFQVIARSFLKDADDTENSELDHGVFLRFQLRGLGNIGSRFEDVMAKEMRNFNERETYRAERYQW.

The N-terminal stretch at 1–30 is a signal peptide; the sequence is MKEGRKRLRAGYCYMLAGVVGVASTGSSRA.

This sequence belongs to the LptD family. As to quaternary structure, component of the lipopolysaccharide transport and assembly complex. Interacts with LptE and LptA.

The protein localises to the cell outer membrane. In terms of biological role, together with LptE, is involved in the assembly of lipopolysaccharide (LPS) at the surface of the outer membrane. The sequence is that of LPS-assembly protein LptD from Hahella chejuensis (strain KCTC 2396).